We begin with the raw amino-acid sequence, 390 residues long: Ribosomal RNA large subunit methyltransferase G (390 aa).

It belongs to the methyltransferase superfamily. RlmG family.

It localises to the cytoplasm. It carries out the reaction guanosine(1835) in 23S rRNA + S-adenosyl-L-methionine = N(2)-methylguanosine(1835) in 23S rRNA + S-adenosyl-L-homocysteine + H(+). Its function is as follows. Specifically methylates the guanine in position 1835 (m2G1835) of 23S rRNA. The sequence is that of Ribosomal RNA large subunit methyltransferase G from Alcanivorax borkumensis (strain ATCC 700651 / DSM 11573 / NCIMB 13689 / SK2).